The chain runs to 313 residues: tRNA-cytidine(32) 2-sulfurtransferase (313 aa).

Residues 47–52 (SGGKDS) carry the PP-loop motif motif. Cys-122, Cys-125, and Cys-213 together coordinate [4Fe-4S] cluster.

This sequence belongs to the TtcA family. As to quaternary structure, homodimer. Mg(2+) serves as cofactor. The cofactor is [4Fe-4S] cluster.

The protein localises to the cytoplasm. The enzyme catalyses cytidine(32) in tRNA + S-sulfanyl-L-cysteinyl-[cysteine desulfurase] + AH2 + ATP = 2-thiocytidine(32) in tRNA + L-cysteinyl-[cysteine desulfurase] + A + AMP + diphosphate + H(+). It participates in tRNA modification. Functionally, catalyzes the ATP-dependent 2-thiolation of cytidine in position 32 of tRNA, to form 2-thiocytidine (s(2)C32). The sulfur atoms are provided by the cysteine/cysteine desulfurase (IscS) system. The sequence is that of tRNA-cytidine(32) 2-sulfurtransferase from Yersinia pseudotuberculosis serotype IB (strain PB1/+).